The following is a 174-amino-acid chain: Small ribosomal subunit protein uS5 (174 aa).

In terms of domain architecture, S5 DRBM spans 17–80 (WQERVVQIRR…ADGKKHLIDV (64 aa)).

It belongs to the universal ribosomal protein uS5 family. As to quaternary structure, part of the 30S ribosomal subunit. Contacts proteins S4 and S8.

With S4 and S12 plays an important role in translational accuracy. Its function is as follows. Located at the back of the 30S subunit body where it stabilizes the conformation of the head with respect to the body. This is Small ribosomal subunit protein uS5 from Thermosynechococcus vestitus (strain NIES-2133 / IAM M-273 / BP-1).